The chain runs to 318 residues: sn-1 stearoyl-lipid 9-desaturase (318 aa).

2 consecutive transmembrane segments (helical) span residues 56–76 and 80–100; these read VIFFFTSIHLVALLAFLPQFF and AVGMAFLLYVITGGIGITLGF. Residues 101 to 106 carry the Histidine box-1 motif; that stretch reads HRCISH. A helical transmembrane segment spans residues 117–137; that stretch reads YIFVICGTLACQGGVFEWVGL. The Histidine box-2 motif lies at 138–142; that stretch reads HRMHH. A helical membrane pass occupies residues 201–221; the sequence is VALGLILFALGGWPFVIWGIF. The Histidine box-3 motif lies at 271–275; that stretch reads HHAYQ.

Belongs to the fatty acid desaturase type 2 family. It depends on Fe(2+) as a cofactor.

It is found in the cellular thylakoid membrane. It catalyses the reaction a 1-octadecanoyl 2-acyl-glycerolipid + 2 reduced [2Fe-2S]-[ferredoxin] + O2 + 2 H(+) = a 1-[(9Z)-octadecenoyl]-2-acyl-glycerolipid + 2 oxidized [2Fe-2S]-[ferredoxin] + 2 H2O. The protein operates within lipid metabolism; polyunsaturated fatty acid biosynthesis. Desaturase involved in fatty acid biosynthesis. Introduces a double bond at carbon 9 of stearoyl groups (18:0) attached to the sn-1 position of the glycerol moiety of membrane glycerolipids. Does not desaturate palmitic acid (16:0), palmitoleic acid (16:1) and cis-vaccenic acid (18:1). In Synechocystis sp. (strain ATCC 27184 / PCC 6803 / Kazusa), this protein is sn-1 stearoyl-lipid 9-desaturase.